Here is a 1022-residue protein sequence, read N- to C-terminus: Leucine--tRNA ligase (1022 aa).

The 'HIGH' region signature appears at 47–57; the sequence is PYPNSPMHLGH. Residues 697 to 701 carry the 'KMSKS' region motif; the sequence is KMSKS. K700 is a binding site for ATP.

This sequence belongs to the class-I aminoacyl-tRNA synthetase family.

Its subcellular location is the cytoplasm. It catalyses the reaction tRNA(Leu) + L-leucine + ATP = L-leucyl-tRNA(Leu) + AMP + diphosphate. The polypeptide is Leucine--tRNA ligase (Ignicoccus hospitalis (strain KIN4/I / DSM 18386 / JCM 14125)).